A 332-amino-acid polypeptide reads, in one-letter code: Holliday junction branch migration complex subunit RuvB (332 aa).

Residues 1–181 (MSRILDNEIM…FGITGHMEYY (181 aa)) are large ATPase domain (RuvB-L). Residues leucine 20, arginine 21, glycine 62, lysine 65, threonine 66, threonine 67, 128–130 (EDF), arginine 171, tyrosine 181, and arginine 218 each bind ATP. Threonine 66 is a Mg(2+) binding site. The tract at residues 182 to 252 (AHAGLTEIVE…ITDKALTMLD (71 aa)) is small ATPAse domain (RuvB-S). A head domain (RuvB-H) region spans residues 255 to 332 (HEGLDYVDQK…EHLGYEYSEK (78 aa)). The DNA site is built by arginine 291, arginine 310, arginine 312, and arginine 315.

It belongs to the RuvB family. As to quaternary structure, homohexamer. Forms an RuvA(8)-RuvB(12)-Holliday junction (HJ) complex. HJ DNA is sandwiched between 2 RuvA tetramers; dsDNA enters through RuvA and exits via RuvB. An RuvB hexamer assembles on each DNA strand where it exits the tetramer. Each RuvB hexamer is contacted by two RuvA subunits (via domain III) on 2 adjacent RuvB subunits; this complex drives branch migration. In the full resolvosome a probable DNA-RuvA(4)-RuvB(12)-RuvC(2) complex forms which resolves the HJ.

Its subcellular location is the cytoplasm. It catalyses the reaction ATP + H2O = ADP + phosphate + H(+). In terms of biological role, the RuvA-RuvB-RuvC complex processes Holliday junction (HJ) DNA during genetic recombination and DNA repair, while the RuvA-RuvB complex plays an important role in the rescue of blocked DNA replication forks via replication fork reversal (RFR). RuvA specifically binds to HJ cruciform DNA, conferring on it an open structure. The RuvB hexamer acts as an ATP-dependent pump, pulling dsDNA into and through the RuvAB complex. RuvB forms 2 homohexamers on either side of HJ DNA bound by 1 or 2 RuvA tetramers; 4 subunits per hexamer contact DNA at a time. Coordinated motions by a converter formed by DNA-disengaged RuvB subunits stimulates ATP hydrolysis and nucleotide exchange. Immobilization of the converter enables RuvB to convert the ATP-contained energy into a lever motion, pulling 2 nucleotides of DNA out of the RuvA tetramer per ATP hydrolyzed, thus driving DNA branch migration. The RuvB motors rotate together with the DNA substrate, which together with the progressing nucleotide cycle form the mechanistic basis for DNA recombination by continuous HJ branch migration. Branch migration allows RuvC to scan DNA until it finds its consensus sequence, where it cleaves and resolves cruciform DNA. The protein is Holliday junction branch migration complex subunit RuvB of Streptococcus pneumoniae (strain JJA).